We begin with the raw amino-acid sequence, 95 residues long: Aspartyl/glutamyl-tRNA(Asn/Gln) amidotransferase subunit C (95 aa).

Belongs to the GatC family. As to quaternary structure, heterotrimer of A, B and C subunits.

The enzyme catalyses L-glutamyl-tRNA(Gln) + L-glutamine + ATP + H2O = L-glutaminyl-tRNA(Gln) + L-glutamate + ADP + phosphate + H(+). It catalyses the reaction L-aspartyl-tRNA(Asn) + L-glutamine + ATP + H2O = L-asparaginyl-tRNA(Asn) + L-glutamate + ADP + phosphate + 2 H(+). Its function is as follows. Allows the formation of correctly charged Asn-tRNA(Asn) or Gln-tRNA(Gln) through the transamidation of misacylated Asp-tRNA(Asn) or Glu-tRNA(Gln) in organisms which lack either or both of asparaginyl-tRNA or glutaminyl-tRNA synthetases. The reaction takes place in the presence of glutamine and ATP through an activated phospho-Asp-tRNA(Asn) or phospho-Glu-tRNA(Gln). The sequence is that of Aspartyl/glutamyl-tRNA(Asn/Gln) amidotransferase subunit C from Chlorobium chlorochromatii (strain CaD3).